The following is a 514-amino-acid chain: MGCDGRVSGLLRRNLQPTLTYWSVFFSFGLCIAFLGPTLLDLRCQTHSSLPQISWVFFSQQLCLLLGSALGGVFKRTLAQSLWALFTSSLAISLVFAVIPFCRDVKVLASVMALAGLAMGCIDTVANMQLVRMYQKDSAVFLQVLHFFVGFGALLSPLIADPFLSEANCLPANSTANTTSRGHLFHVSRVLGQHHVDAKPWSNQTFPGLTPKDGAGTRVSYAFWIMALINLPVPMAVLMLLSKERLLTCCPQRRPLLLSADELALETQPPEKEDASSLPPKFQSHLGHEDLFSCCQRKNLRGAPYSFFAIHITGALVLFMTDGLTGAYSAFVYSYAVEKPLSVGHKVAGYLPSLFWGFITLGRLLSIPISSRMKPATMVFINVVGVVVTFLVLLIFSYNVVFLFVGTASLGLFLSSTFPSMLAYTEDSLQYKGCATTVLVTGAGVGEMVLQMLVGSIFQAQGSYSFLVCGVIFGCLAFTFYILLLFFHRMHPGLPSVPTQDRSIGMENSECYQR.

The next 5 helical transmembrane spans lie at 19–39, 53–73, 82–102, 107–127, and 139–159; these read LTYW…GPTL, ISWV…LGGV, LWAL…IPFC, VLAS…TVAN, and AVFL…SPLI. An N-linked (GlcNAc...) asparagine glycan is attached at Asn177. The next 7 membrane-spanning stretches (helical) occupy residues 221–241, 307–327, 347–367, 376–396, 400–420, 438–458, and 466–486; these read YAFW…LMLL, FFAI…LTGA, VAGY…LLSI, ATMV…LLIF, VVFL…TFPS, VLVT…GSIF, and FLVC…LLLF.

It belongs to the major facilitator superfamily.

The protein localises to the membrane. The sequence is that of Major facilitator superfamily domain-containing protein 4A from Homo sapiens (Human).